A 139-amino-acid chain; its full sequence is ATP synthase epsilon chain (139 aa).

Belongs to the ATPase epsilon chain family. F-type ATPases have 2 components, CF(1) - the catalytic core - and CF(0) - the membrane proton channel. CF(1) has five subunits: alpha(3), beta(3), gamma(1), delta(1), epsilon(1). CF(0) has three main subunits: a, b and c.

The protein localises to the cell membrane. Functionally, produces ATP from ADP in the presence of a proton gradient across the membrane. The chain is ATP synthase epsilon chain from Enterococcus faecalis (strain ATCC 700802 / V583).